Here is a 193-residue protein sequence, read N- to C-terminus: Orotate phosphoribosyltransferase (193 aa).

5-phospho-alpha-D-ribose 1-diphosphate is bound at residue 114–122; it reads EDVITTGGS. Residues threonine 118 and arginine 146 each contribute to the orotate site.

The protein belongs to the purine/pyrimidine phosphoribosyltransferase family. PyrE subfamily. In terms of assembly, homodimer. Requires Mg(2+) as cofactor.

It carries out the reaction orotidine 5'-phosphate + diphosphate = orotate + 5-phospho-alpha-D-ribose 1-diphosphate. It functions in the pathway pyrimidine metabolism; UMP biosynthesis via de novo pathway; UMP from orotate: step 1/2. Catalyzes the transfer of a ribosyl phosphate group from 5-phosphoribose 1-diphosphate to orotate, leading to the formation of orotidine monophosphate (OMP). The protein is Orotate phosphoribosyltransferase of Chlorobaculum parvum (strain DSM 263 / NCIMB 8327) (Chlorobium vibrioforme subsp. thiosulfatophilum).